Consider the following 72-residue polypeptide: UPF0270 protein YheU (72 aa).

Belongs to the UPF0270 family.

This is UPF0270 protein YheU from Escherichia fergusonii (strain ATCC 35469 / DSM 13698 / CCUG 18766 / IAM 14443 / JCM 21226 / LMG 7866 / NBRC 102419 / NCTC 12128 / CDC 0568-73).